Consider the following 145-residue polypeptide: Immune protein Tsi4 (145 aa).

2 consecutive transmembrane segments (helical) span residues 9–29 (IGGL…LLAG) and 109–129 (ALWG…IVGF).

It is found in the membrane. Its function is as follows. Immunity protein that plays a role in preventing early activation of toxin Tse4. The chain is Immune protein Tsi4 from Pseudomonas aeruginosa (strain ATCC 15692 / DSM 22644 / CIP 104116 / JCM 14847 / LMG 12228 / 1C / PRS 101 / PAO1).